The primary structure comprises 505 residues: MMQMMEFSFSSPAFFLLLPFLFLLIKPLISRKRGPKLPPGPKKLPIVGNLFHMEGALPHLALKKMTDKYGPICHLKLGELEAVVVSSAELAKEVLNTHAVTFADRPETNVSKIVMYNNSGMTFARYGDYFKLLRQIYASELLSPRCVRSSTNHMEDELSKFVVKIQAEAGKPIFLLERVKSYLFAVLFDSMIGGACKCPERYIEAAKELSANSAAMRLEDFFPSVTLLPKLSGFNTVLAKLKKKIDDLLDDLISEREKIQANATGPMEEHMLDVLLKLRNGSGSETKVPITNEDVKAVVFELMLSNLSTAATEEWAMSEMMRSPKVFKKAQDEVRRVFKGKNRICASELHNLEYLKLVIKEALRMHPPAPLLFPRKAREDCEIGGYTIPVGTMVWVNYWAVGRDPQLWHDADKFEPERFSNVPMDFNGSHSELIPFGAGRRICPGIAYGVTNLELLLSALLYHFDWELPNGKQPEEIDMDEFYGSGCIRKNPLALIPKVVIPCQA.

The chain crosses the membrane as a helical span at residues 9–29; it reads FSSPAFFLLLPFLFLLIKPLI. Cys-443 provides a ligand contact to heme.

It belongs to the cytochrome P450 family. Heme serves as cofactor. Mainly expressed in roots.

The protein localises to the membrane. It catalyses the reaction (19E)-geissoschizine + reduced [NADPH--hemoprotein reductase] + O2 = akuammicine + formate + oxidized [NADPH--hemoprotein reductase] + H2O + H(+). It carries out the reaction (19E)-geissoschizine + reduced [NADPH--hemoprotein reductase] + O2 = 3,17-didehydrostemmadenine + oxidized [NADPH--hemoprotein reductase] + 2 H2O. The catalysed reaction is 3,17-didehydrostemmadenine = 17-dehydropreakuammicine. It participates in alkaloid biosynthesis. Monooxygenase involved in the biosynthesis of curare monoterpene indole alkaloids (MIAs), natural products such as strychnine, a neurotoxic compound used as a pesticide to control rodents, and its pharmacologically active derivatives, including brucine, used to regulate blood pressure. Curare alkaloids act as animal glycine receptor antagonists. Catalyzes the conversion of geissoschizine to dehydropreakuammicine by cyclization, which is spontaneously converted into akuammicine by aromatization. The sequence is that of Geissoschizine oxidase from Strychnos nux-vomica (Poison nut).